Here is a 459-residue protein sequence, read N- to C-terminus: ATP-dependent protease ATPase subunit HslU (459 aa).

ATP-binding positions include Val-18, 60-65 (GVGKTE), Asp-272, Glu-337, and Arg-409.

It belongs to the ClpX chaperone family. HslU subfamily. In terms of assembly, a double ring-shaped homohexamer of HslV is capped on each side by a ring-shaped HslU homohexamer. The assembly of the HslU/HslV complex is dependent on binding of ATP.

The protein localises to the cytoplasm. ATPase subunit of a proteasome-like degradation complex; this subunit has chaperone activity. The binding of ATP and its subsequent hydrolysis by HslU are essential for unfolding of protein substrates subsequently hydrolyzed by HslV. HslU recognizes the N-terminal part of its protein substrates and unfolds these before they are guided to HslV for hydrolysis. The polypeptide is ATP-dependent protease ATPase subunit HslU (Thermoanaerobacter sp. (strain X514)).